A 301-amino-acid chain; its full sequence is Acetylglutamate kinase (301 aa).

Residues 72–73, Arg-94, and Asn-199 contribute to the substrate site; that span reads GG.

Belongs to the acetylglutamate kinase family. ArgB subfamily.

It is found in the cytoplasm. The catalysed reaction is N-acetyl-L-glutamate + ATP = N-acetyl-L-glutamyl 5-phosphate + ADP. It functions in the pathway amino-acid biosynthesis; L-arginine biosynthesis; N(2)-acetyl-L-ornithine from L-glutamate: step 2/4. Functionally, catalyzes the ATP-dependent phosphorylation of N-acetyl-L-glutamate. The polypeptide is Acetylglutamate kinase (Bartonella bacilliformis (strain ATCC 35685 / KC583 / Herrer 020/F12,63)).